Here is a 171-residue protein sequence, read N- to C-terminus: MPLTWKDSGLRWYWVAVLVFFADQLSKQWVLANFDLHESLNLLPFFNFTYVRNYGAAFSFLSDAGGWQRWLFTIVAVGFSTLLTVWLRKQSASLLKLNLAYTLVIGGALGNLVDRLMHGFVVDFIDFFWAKSHYPAFNIADSAICIGAVLIIWDAFLSGKSETDSAEGVKK.

The next 3 membrane-spanning stretches (helical) occupy residues 12–32 (WYWVAVLVFFADQLSKQWVLA), 67–87 (WQRWLFTIVAVGFSTLLTVWL), and 93–113 (SLLKLNLAYTLVIGGALGNLV). Residues aspartate 123 and aspartate 141 contribute to the active site. The helical transmembrane segment at 137–157 (FNIADSAICIGAVLIIWDAFL) threads the bilayer.

Belongs to the peptidase A8 family.

Its subcellular location is the cell inner membrane. It carries out the reaction Release of signal peptides from bacterial membrane prolipoproteins. Hydrolyzes -Xaa-Yaa-Zaa-|-(S,diacylglyceryl)Cys-, in which Xaa is hydrophobic (preferably Leu), and Yaa (Ala or Ser) and Zaa (Gly or Ala) have small, neutral side chains.. The protein operates within protein modification; lipoprotein biosynthesis (signal peptide cleavage). In terms of biological role, this protein specifically catalyzes the removal of signal peptides from prolipoproteins. The protein is Lipoprotein signal peptidase of Shewanella baltica (strain OS195).